The following is a 187-amino-acid chain: Cytochrome b-245 chaperone 1 (187 aa).

A helical transmembrane segment spans residues 20-42 (GIRSWSLLVGILSTGLAAAYYSG). Positions 167 to 187 (ESPSERSQSSDSEPDGPGGQS) are disordered. Ser-168 and Ser-170 each carry phosphoserine.

It belongs to the CYBC1 family. As to quaternary structure, interacts with CYBB; CYBC1 may act as a chaperone stabilizing Cytochrome b-245 heterodimer.

It is found in the endoplasmic reticulum membrane. Functionally, functions as a chaperone necessary for a stable expression of the CYBA and CYBB subunits of the cytochrome b-245 heterodimer. Controls the phagocyte respiratory burst and is essential for innate immunity. The chain is Cytochrome b-245 chaperone 1 from Mus musculus (Mouse).